Consider the following 280-residue polypeptide: Fructose-1,6-bisphosphatase class 1 (280 aa).

Residues Glu-64, Asp-83, Leu-85, and Asp-86 each contribute to the Mg(2+) site. Substrate contacts are provided by residues 86-89, Tyr-189, and Lys-220; that span reads DGSS. Glu-226 lines the Mg(2+) pocket.

It belongs to the FBPase class 1 family. As to quaternary structure, homotetramer. The cofactor is Mg(2+).

Its subcellular location is the cytoplasm. The catalysed reaction is beta-D-fructose 1,6-bisphosphate + H2O = beta-D-fructose 6-phosphate + phosphate. Its pathway is carbohydrate biosynthesis; gluconeogenesis. The protein is Fructose-1,6-bisphosphatase class 1 of Campylobacter jejuni (strain RM1221).